The chain runs to 176 residues: Large ribosomal subunit protein uL10 (176 aa).

Belongs to the universal ribosomal protein uL10 family. Part of the ribosomal stalk of the 50S ribosomal subunit. The N-terminus interacts with L11 and the large rRNA to form the base of the stalk. The C-terminus forms an elongated spine to which L12 dimers bind in a sequential fashion forming a multimeric L10(L12)X complex.

Forms part of the ribosomal stalk, playing a central role in the interaction of the ribosome with GTP-bound translation factors. The chain is Large ribosomal subunit protein uL10 from Dehalococcoides mccartyi (strain ATCC BAA-2100 / JCM 16839 / KCTC 5957 / BAV1).